The following is a 307-amino-acid chain: 4-hydroxythreonine-4-phosphate dehydrogenase (307 aa).

2 residues coordinate substrate: His126 and Thr127. Residues His156, His195, and His251 each coordinate a divalent metal cation. Residues Lys259, Asn268, and Arg277 each contribute to the substrate site.

The protein belongs to the PdxA family. As to quaternary structure, homodimer. Zn(2+) is required as a cofactor. Requires Mg(2+) as cofactor. It depends on Co(2+) as a cofactor.

The protein localises to the cytoplasm. It carries out the reaction 4-(phosphooxy)-L-threonine + NAD(+) = 3-amino-2-oxopropyl phosphate + CO2 + NADH. It functions in the pathway cofactor biosynthesis; pyridoxine 5'-phosphate biosynthesis; pyridoxine 5'-phosphate from D-erythrose 4-phosphate: step 4/5. In terms of biological role, catalyzes the NAD(P)-dependent oxidation of 4-(phosphooxy)-L-threonine (HTP) into 2-amino-3-oxo-4-(phosphooxy)butyric acid which spontaneously decarboxylates to form 3-amino-2-oxopropyl phosphate (AHAP). This Helicobacter pylori (strain J99 / ATCC 700824) (Campylobacter pylori J99) protein is 4-hydroxythreonine-4-phosphate dehydrogenase.